A 494-amino-acid polypeptide reads, in one-letter code: Probable malate:quinone oxidoreductase (494 aa).

The protein belongs to the MQO family. It depends on FAD as a cofactor.

It carries out the reaction (S)-malate + a quinone = a quinol + oxaloacetate. It functions in the pathway carbohydrate metabolism; tricarboxylic acid cycle; oxaloacetate from (S)-malate (quinone route): step 1/1. In Helicobacter hepaticus (strain ATCC 51449 / 3B1), this protein is Probable malate:quinone oxidoreductase.